We begin with the raw amino-acid sequence, 319 residues long: Dehydrogenase/reductase SDR family member 9 (319 aa).

Residues 1–20 form the signal peptide; the sequence is MLFWLLALLFLCAFLWNYKG. NAD(+)-binding positions include 34–58 and aspartate 83; that span reads ITGC…RVIA. A substrate-binding site is contributed by serine 164. The active-site Proton acceptor is tyrosine 176. Lysine 180 provides a ligand contact to NAD(+).

The protein belongs to the short-chain dehydrogenases/reductases (SDR) family. As to quaternary structure, homotetramer.

The protein resides in the microsome membrane. Its subcellular location is the endoplasmic reticulum membrane. The enzyme catalyses 3beta-hydroxy-5alpha-pregnane-20-one + NAD(+) = 5alpha-pregnane-3,20-dione + NADH + H(+). It catalyses the reaction 17beta-hydroxy-5alpha-androstan-3-one + NAD(+) = 5alpha-androstan-3,17-dione + NADH + H(+). It carries out the reaction androsterone + NAD(+) = 5alpha-androstan-3,17-dione + NADH + H(+). The catalysed reaction is 5alpha-androstane-3alpha,17beta-diol + NAD(+) = 17beta-hydroxy-5alpha-androstan-3-one + NADH + H(+). The enzyme catalyses all-trans-retinol + NAD(+) = all-trans-retinal + NADH + H(+). It catalyses the reaction 3alpha-hydroxy-5alpha-pregnan-20-one + NAD(+) = 5alpha-pregnane-3,20-dione + NADH + H(+). In terms of biological role, 3-alpha-hydroxysteroid dehydrogenase that converts 3-alpha-tetrahydroprogesterone (allopregnanolone) to dihydroxyprogesterone and 3-alpha-androstanediol to dihydroxyprogesterone. Also plays a role in the biosynthesis of retinoic acid. Can utilize both NADH and NADPH. The sequence is that of Dehydrogenase/reductase SDR family member 9 (Dhrs9) from Mus musculus (Mouse).